A 281-amino-acid chain; its full sequence is MERPPRALLLGAAGLLLLLLPLSSSSSSDACGPCVPASCPALPRLGCPLGETRDACGCCPVCARGEGEPCGGGAAGRGHCAPGMECVKSRKRRKGKAGAAAGGPATLAVCVCKSRYPVCGSNGITYPSGCQLRAASLRAESRGEKAITQVSKGTCEQGPSIVTPPKDIWNVTGAKVFLSCEVIGIPTPVLIWNKVKRDHSGVQRTELLPGDRENLAIQTRGGPEKHEVTGWVLVSPLSKEDAGEYECHASNSQGQASAAAKITVVDALHEIPLKKGEGAQL.

A signal peptide spans 1-25; the sequence is MERPPRALLLGAAGLLLLLLPLSSS. The IGFBP N-terminal domain maps to 27 to 113; that stretch reads SSDACGPCVP…PATLAVCVCK (87 aa). 8 cysteine pairs are disulfide-bonded: C31–C56, C34–C58, C39–C59, C47–C62, C70–C86, C80–C110, C112–C130, and C119–C155. Residues 98 to 157 enclose the Kazal-like domain; sequence GAAAGGPATLAVCVCKSRYPVCGSNGITYPSGCQLRAASLRAESRGEKAITQVSKGTCEQ. Residues 159–263 form the Ig-like C2-type domain; that stretch reads PSIVTPPKDI…GQASAAAKIT (105 aa). The N-linked (GlcNAc...) asparagine glycan is linked to N170. An intrachain disulfide couples C180 to C247. Phosphoserine is present on S238.

May interact with VPS24/CHMP3; the relevance of such interaction however remains unclear. Interacts with CD93; this interaction plays a role in endothelial cells angiogenesis. In terms of processing, N-glycosylated. Expressed at high levels in lung, kidney, small intestine, testis and uterus and at moderate levels in liver.

It is found in the secreted. Its function is as follows. Binds IGF1 and IGF2 with a relatively low affinity. Stimulates prostacyclin (PGI2) production. Stimulates cell adhesion. Acts as a ligand for CD93 to play a role in angiogenesis. In Mus musculus (Mouse), this protein is Insulin-like growth factor-binding protein 7 (Igfbp7).